Here is a 175-residue protein sequence, read N- to C-terminus: Keratin-associated protein 13-2 (175 aa).

5 repeat units span residues 46–55, 56–65, 66–75, 76–85, and 92–101. The tract at residues 46–101 is 5 X 10 AA approximate repeats; sequence CQLGSSLYRGCQEICWEPTSCQTSYVESSPCQTSCYRPRTSLLCSPCKTTYSGSLG.

This sequence belongs to the PMG family. As to quaternary structure, interacts with hair keratins.

Its function is as follows. In the hair cortex, hair keratin intermediate filaments are embedded in an interfilamentous matrix, consisting of hair keratin-associated proteins (KRTAP), which are essential for the formation of a rigid and resistant hair shaft through their extensive disulfide bond cross-linking with abundant cysteine residues of hair keratins. The matrix proteins include the high-sulfur and high-glycine-tyrosine keratins. This is Keratin-associated protein 13-2 (KRTAP13-2) from Homo sapiens (Human).